The sequence spans 273 residues: Large ribosomal subunit protein uL2cz/uL2cy (273 aa).

2 disordered regions span residues 1–25 and 224–273; these read MAIH…VKSN and NPVD…RRRK.

This sequence belongs to the universal ribosomal protein uL2 family. As to quaternary structure, part of the 50S ribosomal subunit.

It localises to the plastid. The protein localises to the chloroplast. This is Large ribosomal subunit protein uL2cz/uL2cy (rpl2-A) from Phalaenopsis aphrodite subsp. formosana (Moth orchid).